Reading from the N-terminus, the 478-residue chain is D-ribulose kinase (478 aa).

The N-terminal 38 residues, 1–38 (MLILRQFQISSFELFQSPKQTGFYSSSRSVPLPRTRFY), are a transit peptide targeting the chloroplast. Substrate is bound by residues Asp-60, 64-67 (SGGR), and Asp-278. ATP is bound by residues Ser-300, Gly-338, and 433–437 (GGAKN).

Belongs to the FGGY kinase family. Requires a divalent metal cation as cofactor.

Its subcellular location is the plastid. It localises to the chloroplast. The catalysed reaction is D-ribulose + ATP = D-ribulose 5-phosphate + ADP + H(+). Functionally, exhibits ATP hydrolysis without substrate. Can phosphorylate D-ribulose with low efficiency. The chain is D-ribulose kinase from Arabidopsis thaliana (Mouse-ear cress).